A 160-amino-acid polypeptide reads, in one-letter code: Probable nucleoside diphosphate kinase DDB_G0292928 (160 aa).

The ATP site is built by Lys-12, Phe-61, Arg-103, Thr-109, Arg-122, and Asn-132. His-135 functions as the Pros-phosphohistidine intermediate in the catalytic mechanism.

This sequence belongs to the NDK family. It depends on Mg(2+) as a cofactor.

The catalysed reaction is a 2'-deoxyribonucleoside 5'-diphosphate + ATP = a 2'-deoxyribonucleoside 5'-triphosphate + ADP. It catalyses the reaction a ribonucleoside 5'-diphosphate + ATP = a ribonucleoside 5'-triphosphate + ADP. This is Probable nucleoside diphosphate kinase DDB_G0292928 from Dictyostelium discoideum (Social amoeba).